A 401-amino-acid chain; its full sequence is Argininosuccinate synthase (401 aa).

Residue 8-16 (AYSGGLDTS) coordinates ATP. Residue tyrosine 86 participates in L-citrulline binding. Residue glycine 116 participates in ATP binding. 3 residues coordinate L-aspartate: threonine 118, asparagine 122, and aspartate 123. An L-citrulline-binding site is contributed by asparagine 122. The L-citrulline site is built by arginine 126, serine 174, glutamate 258, and tyrosine 270.

The protein belongs to the argininosuccinate synthase family. Type 1 subfamily. As to quaternary structure, homotetramer.

The protein resides in the cytoplasm. It catalyses the reaction L-citrulline + L-aspartate + ATP = 2-(N(omega)-L-arginino)succinate + AMP + diphosphate + H(+). It participates in amino-acid biosynthesis; L-arginine biosynthesis; L-arginine from L-ornithine and carbamoyl phosphate: step 2/3. This Acidothermus cellulolyticus (strain ATCC 43068 / DSM 8971 / 11B) protein is Argininosuccinate synthase.